We begin with the raw amino-acid sequence, 279 residues long: GDT1-like protein 3 (279 aa).

An N-terminal signal peptide occupies residues 1–23 (MDPNPRLLILLVLLAFSATVAVA). Transmembrane regions (helical) follow at residues 64–84 (VGPG…VSEI), 103–123 (IVLS…TGLG), 135–155 (TNSA…YIAW), 186–206 (FFGR…FLAE), 224–244 (AIGV…LAVI), and 258–278 (VATI…FYPP).

Belongs to the GDT1 family.

Its subcellular location is the membrane. The polypeptide is GDT1-like protein 3 (Oryza sativa subsp. japonica (Rice)).